A 506-amino-acid polypeptide reads, in one-letter code: AAA-ATPase At4g25835 (506 aa).

The signal sequence occupies residues 1–20; it reads MKEYWTSLASLLGVLAFCQS. 244 to 251 provides a ligand contact to ATP; that stretch reads GPPGTGKS. The interval 462–506 is disordered; that stretch reads GKSRVQNVSLEEQENRAFDSLYAEENGGEEEEIEDNICKSSDDCS. Acidic residues predominate over residues 487–496; the sequence is NGGEEEEIED. Positions 497-506 are enriched in basic and acidic residues; sequence NICKSSDDCS.

The protein belongs to the AAA ATPase family. BCS1 subfamily. The cofactor is Mg(2+).

It carries out the reaction ATP + H2O = ADP + phosphate + H(+). This Arabidopsis thaliana (Mouse-ear cress) protein is AAA-ATPase At4g25835.